A 134-amino-acid chain; its full sequence is Loki profilin-2 (134 aa).

Residues 55–62 (LALGEKGI) form a loki loop region.

Belongs to the Asgard profilin family.

It localises to the cytoplasm. It is found in the cytoskeleton. Its activity is regulated as follows. Inhibition of rabbit actin polymerization is reduced by phosphatidylinositol-(4,5)-P2(1,2-dipalmitoyl), a soluble form of the phospholipid phosphatidylinositol, suggesting an unknown lipid might regulate actin-profilin interaction in vivo. Its function is as follows. Binds to actin and affects the structure of the cytoskeleton. At high concentrations inhibits spontaneous rabbit actin nucleation. This strongly suggests this archaea has a profilin-regulated actin system, and actin-type genes can be identified in this organism. The chain is Loki profilin-2 from Lokiarchaeum sp. (strain GC14_75).